The following is a 235-amino-acid chain: 6-phosphogluconolactonase (235 aa).

This sequence belongs to the glucosamine/galactosamine-6-phosphate isomerase family. 6-phosphogluconolactonase subfamily.

The catalysed reaction is 6-phospho-D-glucono-1,5-lactone + H2O = 6-phospho-D-gluconate + H(+). It participates in carbohydrate degradation; pentose phosphate pathway; D-ribulose 5-phosphate from D-glucose 6-phosphate (oxidative stage): step 2/3. Its function is as follows. Hydrolysis of 6-phosphogluconolactone to 6-phosphogluconate. This chain is 6-phosphogluconolactonase (pgl), found in Borreliella burgdorferi (strain ATCC 35210 / DSM 4680 / CIP 102532 / B31) (Borrelia burgdorferi).